We begin with the raw amino-acid sequence, 602 residues long: MDPKPTSMWSSIVKKDPPSKPPVNDGAPAAILGMVGNCKSTKGISIAVVDANAIIEGRQSLTNFADKFVTVPEVLSEIRDPASRRRLAFIPFTIDTMEPSPESLSKVIKFARATGDLQSLSDVDLKLIALSYTLEAQVYGTKNLRDVPPPIQTVRVKRLPEKDLPGWGSNVANLEEWEALENETEEKSNANSKILPLKDLNMNIIASDNVSEVGSVVSHTENHEEDVQEGGKKHRRYPPKKTEIKLEGKMVVEGVDASQGQYDDDDDASDWRPAVSRSTHSKYLRRKARWEHYNALAEQEIQKDQEADKARHTKEANETHAKDSGKNGEDISSILKDMRLEEESLRALQEETEETNAEATLINGEDDIDHDIEVEAEGIDVANQALENLEIASEAEDTFEASSIGDDGSSEQSWSLRALSESSVACITGDYAMQNVILQMGLRLLAPGGMQIRQLHRWILKCHACYTVTPEIGRIFCPKCGNGGTLRKVAVTIGANGAIIAACKPRITLRGTQYSIPMPKGGREAITKNLILREDQLPQKLLHPRTKKKASKPGDEYFVSDDVFLNHHSDRKAPLQPPVRKAMSVFSQKRNPNDNHYSRSMH.

Residues 1-25 (MDPKPTSMWSSIVKKDPPSKPPVND) form a disordered region. A PINc domain is found at 48–134 (VVDANAIIEG…LKLIALSYTL (87 aa)). 2 disordered regions span residues 258-278 (SQGQ…VSRS) and 301-331 (IQKD…GEDI). Basic and acidic residues predominate over residues 301 to 329 (IQKDQEADKARHTKEANETHAKDSGKNGE). Residues 331-365 (ISSILKDMRLEEESLRALQEETEETNAEATLINGE) are a coiled coil. Residues 452–522 (IRQLHRWILK…QYSIPMPKGG (71 aa)) form an NOB1 zinc finger. Residues C462, C465, C477, and C480 each coordinate Zn(2+).

It belongs to the NOB1 family. As to quaternary structure, component of the small ribosomal subunit, ribosomal RNA processing complex (SSU RRP complex). Highly expressed in flowers and siliques and at lower levels in roots, hypocotyls, stems, leaves and seeds.

The protein localises to the nucleus. It is found in the nucleoplasm. Its subcellular location is the cytoplasm. In terms of biological role, essential protein required during embryogenesis and pollen development. Endonuclease cleaving pre-rRNA at the 3' end of the mature 18S rRNA (D-site); cleaves 20S pre-rRNA in the cytoplasm. Required for processing of 20S pre-rRNA precursor and biogenesis of 40S ribosomal subunits. In Arabidopsis thaliana (Mouse-ear cress), this protein is RNA-binding NOB1-like protein.